The following is an 830-amino-acid chain: Beta-glucosidase A (830 aa).

Residue aspartate 769 is part of the active site.

Belongs to the glycosyl hydrolase 3 family.

It carries out the reaction Hydrolysis of terminal, non-reducing beta-D-glucosyl residues with release of beta-D-glucose.. In terms of biological role, b.fibrisolvens beta-glucosidase hydrolyzes cellobiose to a limited extent, cellotriose to cellobiose and glucose, and cellotetraose and cellopentaose to predominantly glucose. The polypeptide is Beta-glucosidase A (bglA) (Butyrivibrio fibrisolvens).